Consider the following 279-residue polypeptide: Stathmin domain-containing protein 1 (279 aa).

Disordered regions lie at residues 1–110 (MGCG…ERPK) and 178–254 (AAEE…VAQM). Gly-2 is lipidated: N-myristoyl glycine. Basic and acidic residues predominate over residues 22–32 (KGWEEGSKADV). Positions 34 to 45 (VTSSKENCSPQT) are enriched in polar residues. The SLD domain maps to 121-248 (QGIIQSRSKV…GEPLKRKKSE (128 aa)). Composition is skewed to basic and acidic residues over residues 178–191 (AAEE…EEIR) and 232–242 (EKSDVQEGEPL).

This Mus musculus (Mouse) protein is Stathmin domain-containing protein 1 (Stmnd1).